Consider the following 111-residue polypeptide: MISTIALFWALCVVCVVNMARYFSSLRALLVVLRGCDPLLYQYVDGGGFFTSHGQPSKQMRLVWYIYAQRYRDHHDDEFIRRCERVRRQFILTSALCGLVVVSLIALMIWH.

Transmembrane regions (helical) follow at residues 1-21 (MIST…NMAR) and 90-110 (FILT…LMIW).

The protein belongs to the universal stress protein B family.

It localises to the cell inner membrane. The protein is Universal stress protein B of Klebsiella pneumoniae (strain 342).